A 955-amino-acid chain; its full sequence is 2-oxoglutarate dehydrogenase E1 component (955 aa).

Belongs to the alpha-ketoglutarate dehydrogenase family. As to quaternary structure, homodimer. Part of the 2-oxoglutarate dehydrogenase (OGDH) complex composed of E1 (2-oxoglutarate dehydrogenase), E2 (dihydrolipoamide succinyltransferase) and E3 (dihydrolipoamide dehydrogenase); the complex contains multiple copies of the three enzymatic components (E1, E2 and E3). It depends on thiamine diphosphate as a cofactor.

It catalyses the reaction N(6)-[(R)-lipoyl]-L-lysyl-[protein] + 2-oxoglutarate + H(+) = N(6)-[(R)-S(8)-succinyldihydrolipoyl]-L-lysyl-[protein] + CO2. In terms of biological role, E1 component of the 2-oxoglutarate dehydrogenase (OGDH) complex which catalyzes the decarboxylation of 2-oxoglutarate, the first step in the conversion of 2-oxoglutarate to succinyl-CoA and CO(2). This chain is 2-oxoglutarate dehydrogenase E1 component, found in Bacillus cereus (strain G9842).